A 209-amino-acid polypeptide reads, in one-letter code: GTP cyclohydrolase-2 (209 aa).

49 to 53 (RIHSE) provides a ligand contact to GTP. 3 residues coordinate Zn(2+): cysteine 54, cysteine 65, and cysteine 67. GTP is bound by residues glutamine 70, 92 to 94 (EGR), and threonine 114. Residue aspartate 126 is the Proton acceptor of the active site. Residue arginine 128 is the Nucleophile of the active site. Threonine 149 and lysine 154 together coordinate GTP.

Belongs to the GTP cyclohydrolase II family. It depends on Zn(2+) as a cofactor.

It catalyses the reaction GTP + 4 H2O = 2,5-diamino-6-hydroxy-4-(5-phosphoribosylamino)-pyrimidine + formate + 2 phosphate + 3 H(+). It participates in cofactor biosynthesis; riboflavin biosynthesis; 5-amino-6-(D-ribitylamino)uracil from GTP: step 1/4. Functionally, catalyzes the conversion of GTP to 2,5-diamino-6-ribosylamino-4(3H)-pyrimidinone 5'-phosphate (DARP), formate and pyrophosphate. The chain is GTP cyclohydrolase-2 from Shewanella pealeana (strain ATCC 700345 / ANG-SQ1).